The following is a 521-amino-acid chain: Bifunctional purine biosynthesis protein PurH (521 aa).

Residues 1–147 (MAKITRALIS…KNNADVTVLV (147 aa)) form the MGS-like domain.

The protein belongs to the PurH family.

The catalysed reaction is (6R)-10-formyltetrahydrofolate + 5-amino-1-(5-phospho-beta-D-ribosyl)imidazole-4-carboxamide = 5-formamido-1-(5-phospho-D-ribosyl)imidazole-4-carboxamide + (6S)-5,6,7,8-tetrahydrofolate. It catalyses the reaction IMP + H2O = 5-formamido-1-(5-phospho-D-ribosyl)imidazole-4-carboxamide. It functions in the pathway purine metabolism; IMP biosynthesis via de novo pathway; 5-formamido-1-(5-phospho-D-ribosyl)imidazole-4-carboxamide from 5-amino-1-(5-phospho-D-ribosyl)imidazole-4-carboxamide (10-formyl THF route): step 1/1. Its pathway is purine metabolism; IMP biosynthesis via de novo pathway; IMP from 5-formamido-1-(5-phospho-D-ribosyl)imidazole-4-carboxamide: step 1/1. This Geobacter sulfurreducens (strain ATCC 51573 / DSM 12127 / PCA) protein is Bifunctional purine biosynthesis protein PurH.